A 278-amino-acid chain; its full sequence is Cyclin-C (278 aa).

Positions 41 to 139 constitute a Cyclin N-terminal domain; the sequence is NVIQALGEHL…ILECEFYLLE (99 aa). The interval 247 to 278 is disordered; the sequence is TILSKMPKPKPPPNSEGEQGPNGSQNSSYSQS. A compositionally biased stretch (polar residues) spans 267 to 278; it reads PNGSQNSSYSQS. Phosphoserine is present on Ser-270.

Belongs to the cyclin family. Cyclin C subfamily. In terms of assembly, component of the Mediator complex, which is composed of MED1, MED4, MED6, MED7, MED8, MED9, MED10, MED11, MED12, MED13, MED13L, MED14, MED15, MED16, MED17, MED18, MED19, MED20, MED21, MED22, MED23, MED24, MED25, MED26, MED27, MED29, MED30, MED31, CCNC, CDK8 and CDC2L6/CDK11. The MED12, MED13, CCNC and CDK8 subunits form a distinct module termed the CDK8 module. Mediator containing the CDK8 module is less active than Mediator lacking this module in supporting transcriptional activation. Individual preparations of the Mediator complex lacking one or more distinct subunits have been variously termed ARC, CRSP, DRIP, PC2, SMCC and TRAP. The cylin/CDK pair formed by CCNC/CDK8 also associates with the large subunit of RNA polymerase II.

Its subcellular location is the nucleus. Functionally, component of the Mediator complex, a coactivator involved in regulated gene transcription of nearly all RNA polymerase II-dependent genes. Mediator functions as a bridge to convey information from gene-specific regulatory proteins to the basal RNA polymerase II transcription machinery. Mediator is recruited to promoters by direct interactions with regulatory proteins and serves as a scaffold for the assembly of a functional preinitiation complex with RNA polymerase II and the general transcription factors. Binds to and activates cyclin-dependent kinase CDK8 that phosphorylates the CTD (C-terminal domain) of the large subunit of RNA polymerase II (RNAp II), which may inhibit the formation of a transcription initiation complex. In Rattus norvegicus (Rat), this protein is Cyclin-C (Ccnc).